A 358-amino-acid polypeptide reads, in one-letter code: Nuclear receptor subfamily 1 group I member 3 (358 aa).

A DNA-binding region (nuclear receptor) is located at residues 18–93 (PRNCVVCGDR…VGMRKDMILS (76 aa)). An NR C4-type zinc finger spans residues 21-41 (CVVCGDRATGYHFHALTCEGC). Thr48 carries the phosphothreonine; by PKC modification. The NR C4-type zinc-finger motif lies at 57 to 81 (CPFAGRCEVSKAQRRHCPACRLQKC). The NR LBD domain occupies 119-358 (QQKELVQILL…MTPLLGEICS (240 aa)).

Belongs to the nuclear hormone receptor family. NR1 subfamily. In terms of assembly, heterodimer of NR1I3 and RXR. Interacts with PSMC4. Interacts with ECT2. Directly interacts with DNAJC7; this complex may also include HSP90. Interacts with CRY1. Interacts with CRY2 in a ligand-dependent manner. In terms of processing, phosphorylated at Thr-48 by PKC, dephosphorylation of Thr-48 is required for nuclear translocation and activation. In terms of tissue distribution, predominantly expressed in liver.

It localises to the nucleus. Its subcellular location is the cytoplasm. The protein resides in the cytoskeleton. Binds and transactivates the retinoic acid response elements that control expression of the retinoic acid receptor beta 2 and alcohol dehydrogenase 3 genes. Transactivates both the phenobarbital responsive element module of the human CYP2B6 gene and the CYP3A4 xenobiotic response element. The sequence is that of Nuclear receptor subfamily 1 group I member 3 (Nr1i3) from Mus musculus (Mouse).